The chain runs to 224 residues: UPF0758 protein AFE_0358 (224 aa).

An MPN domain is found at 102 to 224; sequence GLDSPLRVRQ…PLSLREQGGW (123 aa). Zn(2+)-binding residues include His-173, His-175, and Asp-186. The JAMM motif motif lies at 173-186; sequence HNHPSGVAEPSAAD.

Belongs to the UPF0758 family.

This Acidithiobacillus ferrooxidans (strain ATCC 23270 / DSM 14882 / CIP 104768 / NCIMB 8455) (Ferrobacillus ferrooxidans (strain ATCC 23270)) protein is UPF0758 protein AFE_0358.